The following is an 87-amino-acid chain: Cell division topological specificity factor (87 aa).

The protein belongs to the MinE family.

Functionally, prevents the cell division inhibition by proteins MinC and MinD at internal division sites while permitting inhibition at polar sites. This ensures cell division at the proper site by restricting the formation of a division septum at the midpoint of the long axis of the cell. This is Cell division topological specificity factor from Neisseria gonorrhoeae (strain ATCC 700825 / FA 1090).